Here is a 77-residue protein sequence, read N- to C-terminus: U8-lycotoxin-Ls1t (77 aa).

A signal peptide spans 1–20 (MKLIIFTGLVPFAIVSLIEA). Positions 21–26 (QAENEK) are excised as a propeptide.

The protein belongs to the neurotoxin 19 (CSTX) family. 08 (U8-Lctx) subfamily. Post-translationally, contains 4 disulfide bonds. Expressed by the venom gland.

Its subcellular location is the secreted. This chain is U8-lycotoxin-Ls1t, found in Lycosa singoriensis (Wolf spider).